The chain runs to 326 residues: Phospholipid scramblase 4 (326 aa).

Residues Met1–Asp32 are disordered. Positions Met1–Met94 are proline-rich domain (PRD). The Cytoplasmic portion of the chain corresponds to Met1–Lys299. The short motif at Asn18 to Ala25 is the SH3-binding 1 element. Positions Pro30–Tyr33 match the PPxY motif motif. Residues Pro41–Ser49 carry the SH3-binding 2 motif. A phosphotyrosine; by ABL mark is found at Tyr79 and Tyr84. An SH3-binding 3 motif is present at residues Met94–Val102. 5 S-palmitoyl cysteine lipidation sites follow: Cys193, Cys194, Cys195, Cys197, and Cys198. The helical transmembrane segment at Met300–Phe316 threads the bilayer. Topologically, residues Glu317–Arg326 are extracellular.

It belongs to the phospholipid scramblase family. In terms of assembly, interacts with PDCD6. Interacts with KPNA2; this interaction mediates the nucleus import of PLSCR4. Ca(2+) is required as a cofactor. The cofactor is Mg(2+). It depends on Zn(2+) as a cofactor.

It localises to the cell membrane. Its subcellular location is the nucleus. The catalysed reaction is a 1,2-diacyl-sn-glycero-3-phosphocholine(in) = a 1,2-diacyl-sn-glycero-3-phosphocholine(out). The enzyme catalyses a 1,2-diacyl-sn-glycero-3-phospho-L-serine(in) = a 1,2-diacyl-sn-glycero-3-phospho-L-serine(out). Catalyzes metal ion-induced ATP-independent rapid bidirectional and non-specific movement of phospholipids (lipid scrambling or lipid flip-flop) between the inner and outer leaflet of the plasma membrane and participates in the redistribution of phospholipids between membrane leaflets. Metal ions bind to the calcium-binding site and induce conformation change in the protein. Has a greater affi nity for Ca(2+) than Mg(2+) and Zn(2+). This chain is Phospholipid scramblase 4, found in Mus musculus (Mouse).